The sequence spans 125 residues: Phosphoribosyl-AMP cyclohydrolase (125 aa).

Residue aspartate 74 coordinates Mg(2+). Cysteine 75 serves as a coordination point for Zn(2+). Residues aspartate 76 and aspartate 78 each coordinate Mg(2+). 2 residues coordinate Zn(2+): cysteine 92 and cysteine 99.

This sequence belongs to the PRA-CH family. As to quaternary structure, homodimer. It depends on Mg(2+) as a cofactor. Zn(2+) is required as a cofactor.

The protein resides in the cytoplasm. It carries out the reaction 1-(5-phospho-beta-D-ribosyl)-5'-AMP + H2O = 1-(5-phospho-beta-D-ribosyl)-5-[(5-phospho-beta-D-ribosylamino)methylideneamino]imidazole-4-carboxamide. Its pathway is amino-acid biosynthesis; L-histidine biosynthesis; L-histidine from 5-phospho-alpha-D-ribose 1-diphosphate: step 3/9. In terms of biological role, catalyzes the hydrolysis of the adenine ring of phosphoribosyl-AMP. The polypeptide is Phosphoribosyl-AMP cyclohydrolase (Pelobacter propionicus (strain DSM 2379 / NBRC 103807 / OttBd1)).